A 215-amino-acid chain; its full sequence is ER lumen protein-retaining receptor 3 (215 aa).

At 1–4 (MNIF) the chain is on the lumenal side. A helical transmembrane segment spans residues 5 to 24 (RLSGDVCHLIAIIILFLKIW). Residues 25–32 (RSKSCAGI) are Cytoplasmic-facing. A helical membrane pass occupies residues 33–52 (SGKSQVLFALVFTTRYLDLF). The interval 47–48 (RY) is interaction with the K-D-E-L motif on target proteins. Residues 53–58 (TSYISA) are Lumenal-facing. A helical transmembrane segment spans residues 59–79 (YNTVMKVVYLLLAYSTVGLIF). The Cytoplasmic segment spans residues 80 to 92 (FRFRNSYDSESDS). Residues 93–110 (FRVEFLLVPVAGLSFLEN) form a helical membrane-spanning segment. At 111-116 (YAFTPL) the chain is on the lumenal side. A helical membrane pass occupies residues 117–135 (EILWTFSIYLESVAILPQL). The Cytoplasmic segment spans residues 136–149 (FMITKTGEAESITA). A helical membrane pass occupies residues 150 to 168 (HYLLFLGLYRALYLANWLW). The interval 159–169 (RALYLANWLWR) is interaction with the K-D-E-L motif on target proteins. Residues 169–178 (RFHTEGFYDQ) are Lumenal-facing. A helical transmembrane segment spans residues 179–199 (IAVVSGVVQTIFYCDFFYLYF). Residues 200–215 (TRVLRGSGKMSLPMPV) are Cytoplasmic-facing. The important for recycling of cargo proteins with the sequence motif K-D-E-L from the Golgi to the endoplasmic reticulum stretch occupies residues 204–208 (RGSGK).

This sequence belongs to the ERD2 family.

The protein localises to the endoplasmic reticulum membrane. It is found in the golgi apparatus membrane. Its subcellular location is the cytoplasmic vesicle. It localises to the COPI-coated vesicle membrane. Receptor for the C-terminal sequence motif K-D-E-L that is present on endoplasmic reticulum resident proteins and that mediates their recycling from the Golgi back to the endoplasmic reticulum. This Danio rerio (Zebrafish) protein is ER lumen protein-retaining receptor 3 (kdelr3).